Consider the following 137-residue polypeptide: Putative transcriptional regulatory protein MJ0173 (137 aa).

Belongs to the Tfx family.

Functionally, putative transcriptional regulator. The chain is Putative transcriptional regulatory protein MJ0173 from Methanocaldococcus jannaschii (strain ATCC 43067 / DSM 2661 / JAL-1 / JCM 10045 / NBRC 100440) (Methanococcus jannaschii).